The following is a 619-amino-acid chain: MATRPGPLTEWPWHRLGNFKYVVMAPVVAHGARRVMRNGWGDLDIAFSLILPSLLLRMIHNQIWISLSRYQTARSKHRIVDRGIEFDQVDRERGWDDQILFNGLVFYAGYLAMPSVRRMPVWRTDGAVVTALVHTGPVEFLYYWFHRALHHHFLYSRYHSHHHASIVTEPITSVIHPFAEHVVYFILFAIPILSTIYLGNVSAMGIVGYIAYIDFMNNMGHCNFELVPEWIFQIFPPLKYLIYTPSFHSLHHTQFRTNYSLFMPFYDYIYNTMDKSSDELYESSLKGTEETPDLVHLTHMTNLQSAYHLRIGIASIASKPYSDSAWYMWTLWPLAWLSMVLAWIYGSSAFVVERIKLNKMKMQTWAIPRYNFQYGLTWEREPINDLIEKAILDADMKGVKVISLGLLNQAKQLNGNGELFRQKYPKLGVRIVDGSGLATAVVLKSIPSDAKKVFLRTGTSKIARAIAIALCDRGVQVIMNEKEVYHMLKSQIPENRASYLKLSSDNVPQLWIVHNIDDNEQKMAPKGTIFIPISQFPLKKLRKDCTYMSTPAMRIPEEMKNIHSCENWLPRRVMSAWHIAGILHALEGWNMHECGDEMMDIEKSWSAAIRHGFLPLTKA.

The next 5 helical transmembrane spans lie at 45 to 65 (IAFSLILPSLLLRMIHNQIWI), 94 to 114 (GWDDQILFNGLVFYAGYLAMP), 126 to 146 (GAVVTALVHTGPVEFLYYWFH), 178 to 198 (FAEHVVYFILFAIPILSTIYL), and 325 to 345 (AWYMWTLWPLAWLSMVLAWIY). The region spanning 138-272 (VEFLYYWFHR…MPFYDYIYNT (135 aa)) is the Fatty acid hydroxylase domain.

The protein belongs to the sterol desaturase family. As to quaternary structure, homodimer.

The protein resides in the endoplasmic reticulum membrane. It catalyses the reaction a long-chain fatty aldehyde + 2 NADPH + O2 + H(+) = a long-chain alkane + formate + 2 NADP(+) + H2O. Its function is as follows. Aldehyde decarbonylase involved in the conversion of aldehydes to alkanes. Core component of a very-long-chain alkane synthesis complex. The polypeptide is Very-long-chain aldehyde decarbonylase GL1-4 (Oryza sativa subsp. indica (Rice)).